We begin with the raw amino-acid sequence, 410 residues long: MAYLGLLSLVALQSLVTGAAFPDETIAEWSVNVYNHLRATGEDENILFSPLSIALAMGVMELGAQGSTLKEIRHSMGYESLKSGEEFSFLRDFSSMVSAEEGQYVMKIANSLFVQNGFHINEEFLQMMKMYFNAEVNHVDFSENVAVANYINKWVENYTNSLLKDLVSPGDFDAVTHLALINAVYFKGNWKSQFRPENTRTFSFTKDDESEVQIPMMYQQGEFYYGEFSDGSNEAGGIYQVLEIPYEGDEISMMLVLSRQEVPLATLEPLLKPQLIEEWANSVKKQKVEVYLPRFTVEQEIDLKDILKALGVTEIFIKDANLTAMSDKKELFLSKAVHKSFIEVNEEGSEAAVASGMIAISRMAVLFPQVIVDHPFLFLIKNRKTGTILFMGRVMHPETMNTSGHDFEEL.

The signal sequence occupies residues 1-16 (MAYLGLLSLVALQSLV). Residue Ser-83 is modified to Phosphoserine. 3 N-linked (GlcNAc...) asparagine glycosylation sites follow: Asn-157, Asn-321, and Asn-401. Ser-403 carries an O-linked (Xyl...) (chondroitin sulfate) serine glycan.

It belongs to the serpin family. As to expression, detected in adult pituitary and adrenal gland.

The protein localises to the secreted. It localises to the cytoplasmic vesicle. It is found in the secretory vesicle lumen. The protein resides in the perikaryon. Functionally, serine protease inhibitor that inhibits plasminogen activators and plasmin but not thrombin. May be involved in the formation or reorganization of synaptic connections as well as for synaptic plasticity in the adult nervous system. May protect neurons from cell damage by tissue-type plasminogen activator. In Rattus norvegicus (Rat), this protein is Neuroserpin (Serpini1).